Consider the following 308-residue polypeptide: MNPIVVVHGGGAGPISKDRKERMHQGIVRAATVGYGILREGGSAVDAVEGAVVALEDDPEFNAGCGSVLNTDGEVEMDASIMDGKDLSVGAVSAVRCIANPIKLARLVMEKTPHCFLTDQGAAQFAAAMGVPEIPGEKLVTEKNKKRLEKEKHEKGAQKTDCEKNLGTVGAVALDFKGNVAYATSTGGIVNKMVGRVGDTPCVGAGGYADNDIGAISTTGHGESILKVNLARLTLFHIEQGKTVEEAADLSLGYMKSRVKGLGGLIVVSKTGDWVAKWTSTSMPWAAAKDGKLHFGIDPDDTAITDLP.

The residue at position 1 (M1) is an N-acetylmethionine. T168 (nucleophile) is an active-site residue. Substrate-binding positions include 196–199 and 219–222; these read RVGD and TGHG.

The protein belongs to the Ntn-hydrolase family. In terms of assembly, heterodimer of an alpha and beta chain produced by autocleavage. This heterodimer may then dimerize in turn, giving rise to a heterotetramer. In terms of processing, cleaved into an alpha and beta chain by autocatalysis; this activates the enzyme. The N-terminal residue of the beta subunit is responsible for the nucleophile hydrolase activity.

Its subcellular location is the cytoplasm. It carries out the reaction L-asparagine + H2O = L-aspartate + NH4(+). It catalyses the reaction Cleavage of a beta-linked Asp residue from the N-terminus of a polypeptide.. Functionally, has both L-asparaginase and beta-aspartyl peptidase activity. May be involved in the production of L-aspartate, which can act as an excitatory neurotransmitter in some brain regions. Is highly active with L-Asp beta-methyl ester. Besides, has catalytic activity toward beta-aspartyl dipeptides and their methyl esters, including beta-L-Asp-L-Phe, beta-L-Asp-L-Phe methyl ester (aspartame), beta-L-Asp-L-Ala, beta-L-Asp-L-Leu and beta-L-Asp-L-Lys. Does not have aspartylglucosaminidase activity and is inactive toward GlcNAc-L-Asn. Likewise, has no activity toward glutamine. The chain is Isoaspartyl peptidase/L-asparaginase (ASRGL1) from Macaca fascicularis (Crab-eating macaque).